The primary structure comprises 79 residues: Protein FAM236A (79 aa).

It belongs to the FAM236 family.

In Homo sapiens (Human), this protein is Protein FAM236A.